The primary structure comprises 304 residues: KIN17-like protein (304 aa).

The C2H2-type zinc finger occupies 26 to 50; that stretch reads WYCSACQKQMRDENGFKCHTQSEGH. 2 disordered regions span residues 204–228 and 261–291; these read IDLSKKGNPIQLNLSSSSDSHSAQN and LNKSRKKNNKDSLDQGQNVKRPRSAVEDIIA.

The protein belongs to the KIN17 family.

The protein localises to the nucleus. It localises to the nucleolus. This chain is KIN17-like protein, found in Schizosaccharomyces pombe (strain 972 / ATCC 24843) (Fission yeast).